The sequence spans 310 residues: N-acetyl-gamma-glutamyl-phosphate reductase (310 aa).

Residue Cys117 is part of the active site.

This sequence belongs to the NAGSA dehydrogenase family. Type 2 subfamily.

The protein localises to the cytoplasm. The catalysed reaction is N-acetyl-L-glutamate 5-semialdehyde + phosphate + NADP(+) = N-acetyl-L-glutamyl 5-phosphate + NADPH + H(+). It functions in the pathway amino-acid biosynthesis; L-arginine biosynthesis; N(2)-acetyl-L-ornithine from L-glutamate: step 3/4. Catalyzes the NADPH-dependent reduction of N-acetyl-5-glutamyl phosphate to yield N-acetyl-L-glutamate 5-semialdehyde. This chain is N-acetyl-gamma-glutamyl-phosphate reductase, found in Brucella suis (strain ATCC 23445 / NCTC 10510).